A 528-amino-acid chain; its full sequence is Ecdysteroid UDP-glucosyltransferase (528 aa).

The N-terminal stretch at 1 to 32 is a signal peptide; sequence MGHLHIVHWRLTMNGAIAALFLCLVMVHQQHA.

This sequence belongs to the UDP-glycosyltransferase family.

In terms of biological role, catalyzes the transfer of glucose from UDP-glucose to ecdysteroids which are insect molting hormones. Expression of egt interferes with normal insect development and block molting. The protein is Ecdysteroid UDP-glucosyltransferase (EGT) of Mamestra brassicae nuclear polyhedrosis virus (MbNPV).